The sequence spans 362 residues: Mannan endo-1,4-beta-mannosidase (362 aa).

The signal sequence occupies residues 1–26; that stretch reads MFKKHTISLLIIFLLASAVLAKPIEA. Residues 38-349 enclose the GH26 domain; sequence QTTKTVMNWL…YHDSWTLNKG (312 aa). A substrate-binding site is contributed by H131. E193 functions as the Proton donor in the catalytic mechanism. Substrate is bound by residues W198 and Y268. E292 (nucleophile) is an active-site residue. 324-325 is a substrate binding site; that stretch reads WN.

Belongs to the glycosyl hydrolase 26 family. As to quaternary structure, homodimer.

Its subcellular location is the secreted. It catalyses the reaction Random hydrolysis of (1-&gt;4)-beta-D-mannosidic linkages in mannans, galactomannans and glucomannans.. Its function is as follows. Involved in the degradation of glucomannan. Catalyzes the endo hydrolysis of beta-1,4-linked mannan, galactomannan and glucomannan. This is Mannan endo-1,4-beta-mannosidase from Bacillus subtilis (strain 168).